Here is a 229-residue protein sequence, read N- to C-terminus: Type-5 uracil-DNA glycosylase (229 aa).

4 residues coordinate [4Fe-4S] cluster: C19, C22, C123, and C138.

Belongs to the uracil-DNA glycosylase (UDG) superfamily. Type 5 (UDGb) family.

Its function is as follows. DNA glycosylase with broad substrate specificity. The protein is Type-5 uracil-DNA glycosylase of Mycobacterium leprae (strain TN).